The primary structure comprises 107 residues: Probable insulin-like peptide beta-type 3 (107 aa).

The signal sequence occupies residues 1 to 19 (MKLSVVLALFIIFQLGAAS). Positions 20 to 55 (LMRNWMFDFEKELEHDYDDSEIGFHNIHSLMARSRR) are excised as a propeptide. Cystine bridges form between Cys-62-Cys-90, Cys-74-Cys-103, Cys-78-Cys-104, and Cys-89-Cys-94.

It belongs to the insulin family.

It is found in the secreted. This Caenorhabditis elegans protein is Probable insulin-like peptide beta-type 3 (ins-3).